The sequence spans 612 residues: Cryptochrome-2 (612 aa).

The tract at residues 1-485 (MKMDKKTIVW…TARELLAKAI (485 aa)) is CNT2, binds chromophores to sense blue light and mediate CRY dimerization. In terms of domain architecture, Photolyase/cryptochrome alpha/beta spans 5–134 (KKTIVWFRRD…SVQSYNGDLL (130 aa)). Residue Tyr-232 coordinates FAD. Residues Asn-235 and Ser-243 each contribute to the Mg(2+) site. 244-248 (TSLLS) is a binding site for FAD. His-355 lines the Mg(2+) pocket. FAD contacts are provided by residues Asn-356 and 387-389 (DAD). An ATP-binding site is contributed by 356–357 (NR). Position 406 (Asp-406) interacts with ATP. The segment at 486 to 612 (SRTREAQIMI…TTSLGKNGCK (127 aa)) is CCT2/CCE2, mediates blue light signaling. The tract at residues 539-576 (GSKRVKPEEEEERDMKKSRGFDERELFSTAESSSSSSV) is disordered. The Nuclear localization signal motif lies at 541–555 (KRVKPEEEEERDMKK). The segment covering 551-564 (RDMKKSRGFDEREL) has biased composition (basic and acidic residues). Ser-587 carries the phosphoserine; by CK1 modification. The tract at residues 590-612 (KNLEGIQDSSDQITTSLGKNGCK) is disordered. A compositionally biased stretch (polar residues) spans 596–612 (QDSSDQITTSLGKNGCK). Residues Ser-598 and Ser-599 each carry the phosphoserine modification. Thr-603 is modified (phosphothreonine; by CK1). Residue Ser-605 is modified to Phosphoserine.

Belongs to the DNA photolyase class-1 family. As to quaternary structure, homodimer. Blue-light dependent dimerization. Interacts with COP1 and PHYB in the nucleus. Binds reversibly to CIBs proteins such as BHLH63/CIB1, BHLH78/CIB2, BHLH74/CIB4 and BHLH76/CIB5 after blue light illumination to stimulate their transcription factor activities. Interacts with PIF4 and PIF5 in the nucleus in response to low blue light (LBL). Binds to SPA1 in response to blue light, this interaction prevents SPA1/COP1 complex formation but stimulates interaction with COP1, and thus avoid COP1-dependent degradation of the transcription factors CO and HY5 by the proteasome and promotes hypocotyl elongation and floral initiation. Binding to ATP mediates conformational changes which facilitate flavin binding. Interacts with BIC1 in both darkness and light. Interacts with NRP. The cofactor is FAD. (6R)-5,10-methylene-5,6,7,8-tetrahydrofolate is required as a cofactor. In terms of processing, phosphorylated by CK1.3 and CK1.4; in response to blue light. Required for degradation. Adopts an open conformation when phosphorylated upon photoexcitation and thus interacts with signaling partner proteins. Not autophosphorylated, even in complex with FAD cofactor. Ubiquitinated; in response to blue light. In terms of tissue distribution, mostly expressed in the shoot meristems and root tips, and, to a lower extent, in the cotyledons, hypocotyls, and roots.

The protein resides in the nucleus. The protein localises to the PML body. It is found in the cytoplasm. Its function is as follows. Photoreceptor that mediates primarily blue light inhibition of hypocotyl elongation and photoperiodic control of floral initiation, and regulates other light responses, including circadian rhythms, tropic growth, stomata opening, guard cell development, root development, bacterial and viral pathogen responses, abiotic stress responses, cell cycles, programmed cell death, apical dominance, fruit and ovule development, seed dormancy, and magnetoreception. Photoexcited cryptochromes interact with signaling partner proteins to alter gene expression at both transcriptional and post-translational levels and, consequently, regulate the corresponding metabolic and developmental programs. Blue-light absorbing flavoprotein that activates reversible flavin photoreduction via an electron transport chain comprising a tryptophan triad (W-321, W-374 and W-397), or via an alternative electron transport that involves small metabolites, including NADPH, NADH, and ATP. The half-life of the activated signaling state is about 16 minutes. Perceives low blue light (LBL) and responds by directly contacting two bHLH transcription factors, PIF4 and PIF5, at chromatin on E-box variant 5'-CA[CT]GTG-3' to promote their activity and stimulate specific gene expression to adapt global physiology (e.g. hypocotyl elongation and hyponastic growth in low blue light). In response to blue light, binds to CIB proteins (e.g. BHLH63/CIB1 and BHLH76/CIB5) to activate transcription and floral initiation. Mediates blue light-induced gene expression, floral initiation and hypocotyl elongation through the interaction with SPA1 that prevents formation of SPA1/COP1 complex but stimulates COP1 binding, and thus inhibits COP1-mediated degradation of transcription factors (e.g. CO and HY5). Promotes flowering time in continuous light (LL). Involved in shortening the circadian clock period, especially at 27 degrees Celsius, in blue light (BL). Required to maintain clock genes expression rhythm. Triggers nuclear accumulation of ROS in response to blue light illumination. Involved in blue light-dependent stomatal opening, transpiration and inhibition of stem and root growth, probably by regulating abscisic acid (ABA). Regulates the timing of flowering by promoting the expression of 'FLOWERING LOCUS T' (FT) in vascular bundles. Negatively regulated by 'FLOWERING LOCUS C' (FLC). General positive regulator of reversible low light-induced chromatin decompaction. Involved in triggering chromatin decondensation during floral transition. Together with phototropins, involved in phototropism regulation by various blue light fluence; blue light attenuates phototropism in high fluence rates (100 umol.m-2.s-1) but enhances phototropism in low fluence rates (&lt;1.0 umol.m-2.s-1). The effect of near-null magnetic field on flowering is altered by changes of blue light cycle and intensity in a CRY1/CRY2-dependent manner. Involved in the strigolactone signaling that regulates hypocotyl growth in response to blue light. In terms of biological role, confers resistance to turnip crinkle virus (TCV) by preventing COP1-mediated proteasome-mediated degradation of RPP8/HRT, thus promoting its stability in light. Exposure to darkness or blue-light induces degradation of CRY2, and in turn of RPP8/HRT, resulting in susceptibility to TCV. The sequence is that of Cryptochrome-2 from Arabidopsis thaliana (Mouse-ear cress).